A 154-amino-acid polypeptide reads, in one-letter code: Myoglobin (154 aa).

One can recognise a Globin domain in the interval 2-148 (GLSDGEWQLV…FRKDMASNYK (147 aa)). Phosphoserine is present on S4. H65 is a nitrite binding site. O2 is bound at residue H65. Phosphothreonine is present on T68. Residue H94 participates in heme b binding.

Belongs to the globin family. In terms of assembly, monomeric.

Its subcellular location is the cytoplasm. The protein localises to the sarcoplasm. It catalyses the reaction Fe(III)-heme b-[protein] + nitric oxide + H2O = Fe(II)-heme b-[protein] + nitrite + 2 H(+). The enzyme catalyses H2O2 + AH2 = A + 2 H2O. Monomeric heme protein which primary function is to store oxygen and facilitate its diffusion within muscle tissues. Reversibly binds oxygen through a pentacoordinated heme iron and enables its timely and efficient release as needed during periods of heightened demand. Depending on the oxidative conditions of tissues and cells, and in addition to its ability to bind oxygen, it also has a nitrite reductase activity whereby it regulates the production of bioactive nitric oxide. Under stress conditions, like hypoxia and anoxia, it also protects cells against reactive oxygen species thanks to its pseudoperoxidase activity. This Gorilla gorilla beringei (Mountain gorilla) protein is Myoglobin (MB).